The primary structure comprises 496 residues: Cytochrome P450 71D181 (496 aa).

A helical; Signal-anchor for type II membrane protein transmembrane segment spans residues 1-21 (MDISISWVAIILVISSYFIFM). Position 435 (Cys-435) interacts with heme. Residues 471 to 496 (MSETPGLSGPRKNPLIMVPTIHNPTS) are disordered.

It belongs to the cytochrome P450 family. Heme serves as cofactor. Expressed at low levels in flowers, leaves and stems.

The protein localises to the membrane. It catalyses the reaction alpha-terpinene + 2 reduced [NADPH--hemoprotein reductase] + 2 O2 = carvacrol + 2 oxidized [NADPH--hemoprotein reductase] + 3 H2O + 2 H(+). It carries out the reaction gamma-terpinene + 2 reduced [NADPH--hemoprotein reductase] + 2 O2 = carvacrol + 2 oxidized [NADPH--hemoprotein reductase] + 3 H2O + 2 H(+). The catalysed reaction is (4S)-limonene + reduced [NADPH--hemoprotein reductase] + O2 = (1S,5R)-carveol + oxidized [NADPH--hemoprotein reductase] + H2O + H(+). The enzyme catalyses (4R)-limonene + reduced [NADPH--hemoprotein reductase] + O2 = (1R,5S)-carveol + oxidized [NADPH--hemoprotein reductase] + H2O + H(+). It functions in the pathway secondary metabolite biosynthesis; terpenoid biosynthesis. Its function is as follows. Involved in the biosynthesis of phenolic monoterpenes natural products thymol and carvacrol which have a broad range of biological activities acting as antimicrobial compounds, insecticides, antioxidants and pharmaceutical agents. Catalyzes the C2-hydroxylation of gamma-terpinene and alpha-terpinene to produce carvacrol. Also mediates the C6-hydroxylation of (4S)-limonene and (4R)-limonene to form carveol. In Origanum vulgare (Wild marjoram), this protein is Cytochrome P450 71D181.